The primary structure comprises 492 residues: E3 ubiquitin-protein ligase XIAP (492 aa).

3 BIR repeats span residues 40–105, 172–237, and 271–334; these read RLAS…KFIN, RLQT…YFVL, and RLET…KFLI. Zn(2+) contacts are provided by C303, C306, H323, and C330. Residues 445–480 form an RING-type zinc finger; sequence CKVCMDRRISIVFIPCGHLVACAVCADVLDKCPICC.

This sequence belongs to the IAP family. Monomer, and homodimer. In terms of processing, degraded in a 2-step mechanism; a caspase-independent first step and a caspase-dependent second step. Stabilized indirectly by MAPK, which acts to delay caspase activation, rather than directly phosphorylating xiap.

The protein resides in the cytoplasm. The enzyme catalyses S-ubiquitinyl-[E2 ubiquitin-conjugating enzyme]-L-cysteine + [acceptor protein]-L-lysine = [E2 ubiquitin-conjugating enzyme]-L-cysteine + N(6)-ubiquitinyl-[acceptor protein]-L-lysine.. In terms of biological role, multi-functional protein which regulates not only caspases and apoptosis, but also acts as an E3 ubiquitin-protein ligase mediating ubiquitination and subsequent proteasomal degradation of its target proteins. Acts as a direct caspase inhibitor. E3 ubiquitin-protein ligase that acts as an important regulator of innate immunity by mediating 'Lys-63'-linked polyubiquitination of ripk2 downstream of NOD1 and NOD2, thereby transforming ripk2 into a scaffolding protein for downstream effectors, ultimately leading to activation of the NF-kappa-B and MAP kinases signaling. A key apoptotic suppressor in eggs. Acts as a positive regulator of Wnt signaling. This is E3 ubiquitin-protein ligase XIAP (xiap) from Xenopus tropicalis (Western clawed frog).